A 589-amino-acid polypeptide reads, in one-letter code: Monocopper oxidase-like protein SKS1 (589 aa).

The first 24 residues, 1–24 (MAATCSLLASFLLCFALLSAVSFA), serve as a signal peptide directing secretion. N-linked (GlcNAc...) asparagine glycans are attached at residues Asn-62, Asn-111, Asn-204, Asn-243, Asn-260, Asn-296, Asn-345, Asn-365, Asn-433, and Asn-447. The disordered stretch occupies residues 322-356 (LPVPKTDVSSPWSAMSQPKTIRQNTSASGARPNPQ). The segment covering 328-349 (DVSSPWSAMSQPKTIRQNTSAS) has biased composition (polar residues). His-455 contributes to the Cu cation binding site. A lipid anchor (GPI-anchor amidated serine) is attached at Ser-563. Positions 564–589 (AATSILNGHLKLMLLMVLLASVFRFC) are cleaved as a propeptide — removed in mature form.

It belongs to the multicopper oxidase family. Requires Cu cation as cofactor.

It localises to the cell membrane. This chain is Monocopper oxidase-like protein SKS1 (SKS1), found in Arabidopsis thaliana (Mouse-ear cress).